We begin with the raw amino-acid sequence, 504 residues long: Maturase K (504 aa).

It belongs to the intron maturase 2 family. MatK subfamily.

Its subcellular location is the plastid. It localises to the chloroplast. In terms of biological role, usually encoded in the trnK tRNA gene intron. Probably assists in splicing its own and other chloroplast group II introns. The sequence is that of Maturase K from Gossypium turneri (Cotton).